Consider the following 55-residue polypeptide: Large ribosomal subunit protein bL33A (55 aa).

This sequence belongs to the bacterial ribosomal protein bL33 family.

This Mycobacterium ulcerans (strain Agy99) protein is Large ribosomal subunit protein bL33A.